Here is a 173-residue protein sequence, read N- to C-terminus: DASH complex subunit SPC19 (173 aa).

Belongs to the DASH complex SPC19 family. As to quaternary structure, component of the DASH complex consisting of ASK1, DAD1, DAD2, DAD3, DAD4, DAM1, DUO1, HSK3, SPC19 and SPC34, with a stoichiometry of one copy of each subunit per complex. Multiple DASH complexes oligomerize to form a ring that encircles spindle microtubules and organizes the rod-like NDC80 complexes of the outer kinetochore. DASH complex oligomerization strengthens microtubule attachments. On cytoplasmic microtubules, DASH complexes appear to form patches instead of rings.

It localises to the nucleus. The protein resides in the cytoplasm. The protein localises to the cytoskeleton. It is found in the spindle. Its subcellular location is the chromosome. It localises to the centromere. The protein resides in the kinetochore. Component of the DASH complex that connects microtubules with kinetochores and couples microtubule depolymerisation to chromosome movement; it is involved in retrieving kinetochores to the spindle poles before their re-orientation on the spindle in early mitosis and allows microtubule depolymerization to pull chromosomes apart and resist detachment during anaphase. Kinetochores, consisting of a centromere-associated inner segment and a microtubule-contacting outer segment, play a crucial role in chromosome segregation by mediating the physical connection between centromeric DNA and microtubules. Kinetochores also serve as an input point for the spindle assembly checkpoint, which delays anaphase until all chromosomes have bioriented on the mitotic spindle. In Chaetomium thermophilum (strain DSM 1495 / CBS 144.50 / IMI 039719) (Thermochaetoides thermophila), this protein is DASH complex subunit SPC19.